The primary structure comprises 633 residues: GRAM domain-containing protein 4 (633 aa).

Disordered stretches follow at residues 1–46 (MGIA…VRPR), 72–109 (LAES…AGPG), and 182–216 (VLKA…RSQG). Positions 27–39 (PWDKGLSGREPPR) are enriched in basic and acidic residues. 2 positions are modified to phosphoserine: Ser-75 and Ser-79. Positions 95–104 (SPRDSEELRD) are enriched in basic and acidic residues. Positions 134–190 (HLEIALLEKHFLQEELRKLREETNSEMLRQELDRERQRRIELEQKMQEVLKARSEEQ) form a coiled coil. Over residues 190–205 (QPAQPQQPPKGQSQAS) the composition is skewed to low complexity. 3 consecutive transmembrane segments (helical) span residues 295–315 (VYMN…LAIL), 389–409 (TTQK…FFPY), and 411–431 (LVGL…DFIF). The region spanning 500 to 578 (GNFHEIFNLT…MDITDIQKYK (79 aa)) is the GRAM domain.

Interacts with RTN4 (isoform B).

The protein resides in the mitochondrion membrane. It localises to the endoplasmic reticulum membrane. Functionally, plays a role as a mediator of E2F1-induced apoptosis in the absence of p53/TP53. Inhibits TLR9 response to nucelic acids and regulates TLR9-mediated innate immune response. The protein is GRAM domain-containing protein 4 of Mus musculus (Mouse).